A 201-amino-acid polypeptide reads, in one-letter code: Small ribosomal subunit protein uS5 (201 aa).

Positions 1–28 (MAGPQRRGSGAGGGERRDRKGRDGGASA) are disordered. Residues 14–23 (GERRDRKGRD) show a composition bias toward basic and acidic residues. Residues 34–97 (YVERVVAINR…EEAKKNFFKV (64 aa)) form the S5 DRBM domain.

This sequence belongs to the universal ribosomal protein uS5 family. In terms of assembly, part of the 30S ribosomal subunit. Contacts proteins S4 and S8.

With S4 and S12 plays an important role in translational accuracy. In terms of biological role, located at the back of the 30S subunit body where it stabilizes the conformation of the head with respect to the body. This is Small ribosomal subunit protein uS5 from Streptomyces griseus subsp. griseus (strain JCM 4626 / CBS 651.72 / NBRC 13350 / KCC S-0626 / ISP 5235).